The following is a 500-amino-acid chain: MSDRLFIFDTTLRDGEQVPGCQLNTVEKIQVAKALEQLGVDVIEAGFPVSSPGDFKSVVEISKAVTWPTICALTRAVEKDIDVAAEALRFAKRGRIHTGIGTSDSHIKYKFNSTREEIIERAIAATKYAKKYVEDVEFYCEDAGRTDNEYLARVVEAVIKAGATVVNIPDTTGYCLPDEYGAKIKYLMEHVDGVHNAILSTHCHNDLGMATANTVQGVLNGARQVEVTINGIGERAGNTSLEEVAMVFKSHKERDIITNITTNKIYSTSRMVSSLMNMPVQPNKAIVGRNAFAHSSGIHQDGVLKNAQTYEIIDPKDVGIDDNAIVLTARSGRAALKHRLHVLGVDLEQEKLDKVYDEFLKLADRKKDINDDDVLMLVGKDRTATHRIKLEYLQVTSGVGVQSVASICLNLSGVRRYEAAAGNGPVDAGIKAVKKAISNSDMTIQEFLIQAINKGSDDTGKVHMQVEYNGATYYGFSANTDIIAASVEAFVDAINKFIVD.

The region spanning 5 to 266 (LFIFDTTLRD…ITNITTNKIY (262 aa)) is the Pyruvate carboxyltransferase domain. D14, H202, H204, and N238 together coordinate Mn(2+). The regulatory domain stretch occupies residues 389–500 (KLEYLQVTSG…VDAINKFIVD (112 aa)).

The protein belongs to the alpha-IPM synthase/homocitrate synthase family. LeuA type 1 subfamily. Homodimer. Requires Mn(2+) as cofactor.

The protein localises to the cytoplasm. The catalysed reaction is 3-methyl-2-oxobutanoate + acetyl-CoA + H2O = (2S)-2-isopropylmalate + CoA + H(+). It participates in amino-acid biosynthesis; L-leucine biosynthesis; L-leucine from 3-methyl-2-oxobutanoate: step 1/4. Catalyzes the condensation of the acetyl group of acetyl-CoA with 3-methyl-2-oxobutanoate (2-ketoisovalerate) to form 3-carboxy-3-hydroxy-4-methylpentanoate (2-isopropylmalate). The protein is 2-isopropylmalate synthase of Parabacteroides distasonis (strain ATCC 8503 / DSM 20701 / CIP 104284 / JCM 5825 / NCTC 11152).